We begin with the raw amino-acid sequence, 280 residues long: MTWKIVTDSGCDLRSLTRQSKELRFERVPLTLQIGTEIFRDDDGLDIDNMMTTMYQSSKATTSSCPSPEAFLQAYRGADNVIVMTITGTLSGSHNSARLAKNELLEENPNVNIHLIDSLSAGGEMDLLVLELERLIKLGLSFEEVVKQITAYQQKTRLIFVLAKVDNLVKNGRLSKLVGKVIGLLNIRMVGKASNKGTLELLQKARGQKKAVSALIEEIQKEGYVGGKVYIAHAQNPKICEQISEKIKSLYPDAVIQTGRTSGLCSFYAEDGGLLMGYEI.

Residues 3-280 (WKIVTDSGCD…DGGLLMGYEI (278 aa)) enclose the DegV domain. Hexadecanoate is bound by residues Ser63 and Ser91.

In terms of biological role, may bind long-chain fatty acids, such as palmitate, and may play a role in lipid transport or fatty acid metabolism. The protein is DegV domain-containing protein SPy_1698/M5005_Spy1391 of Streptococcus pyogenes serotype M1.